Consider the following 968-residue polypeptide: Translation initiation factor IF-2 (968 aa).

Residues 51–76 (PAAGASKSEAPAAAPKAPASPAATRP) show a composition bias toward low complexity. Residues 51 to 369 (PAAGASKSEA…GVSVPRGDGN (319 aa)) are disordered. Residues 77 to 87 (APAPGPAAPKA) show a composition bias toward pro residues. A compositionally biased stretch (low complexity) spans 93–102 (EAPAAASAPS). Over residues 103 to 112 (APAPAAPAPA) the composition is skewed to pro residues. 3 stretches are compositionally biased toward low complexity: residues 113–122 (APAAAASAPS), 128–170 (APST…GNNP), and 239–254 (GARP…PGAR). Over residues 281-336 (GRPGGGGRGPGRPGGAPGTGGAPGAGGGAPAGGGFGKGGRGRGGTQGAFGKGGAGR) the composition is skewed to gly residues. The segment covering 337-346 (GKQRKSKRAK) has biased composition (basic residues). Residues 461-632 (ARPPVVTVMG…AVLLTADAAL (172 aa)) form the tr-type G domain. The interval 470 to 477 (GHVDHGKT) is G1. 470–477 (GHVDHGKT) provides a ligand contact to GTP. The G2 stretch occupies residues 495–499 (GITQH). Residues 520–523 (DTPG) form a G3 region. Residues 520 to 524 (DTPGH) and 574 to 577 (NKID) each bind GTP. The tract at residues 574–577 (NKID) is G4. The interval 610–612 (SAR) is G5.

It belongs to the TRAFAC class translation factor GTPase superfamily. Classic translation factor GTPase family. IF-2 subfamily.

It localises to the cytoplasm. One of the essential components for the initiation of protein synthesis. Protects formylmethionyl-tRNA from spontaneous hydrolysis and promotes its binding to the 30S ribosomal subunits. Also involved in the hydrolysis of GTP during the formation of the 70S ribosomal complex. The sequence is that of Translation initiation factor IF-2 from Arthrobacter sp. (strain FB24).